Reading from the N-terminus, the 323-residue chain is Sphingolipid delta(4)-desaturase DES1 (323 aa).

2 helical membrane-spanning segments follow: residues 41–61 (YNLI…FYLV) and 68–88 (WVVF…TLAI). Positions 89 to 93 (HEISH) match the Histidine box-1 motif. A helical transmembrane segment spans residues 102–122 (AMWNRWFGIFANLPLGLPYSI). Residues 128 to 132 (HMDHH) carry the Histidine box-2 motif. Transmembrane regions (helical) follow at residues 159–179 (KFIW…CINP), 185–205 (LEII…YLWG), and 209–229 (IFYM…SGHF). Residues 259 to 263 (HNEHH) carry the Histidine box-3 motif.

The protein belongs to the fatty acid desaturase type 1 family. DEGS subfamily. As to quaternary structure, interacts with RLBP1; the interaction increases synthesis of chromophore-precursors by DEGS1. As to expression, expressed in retina and retinal pigment epithelium by Mueller cells (at protein level).

It is found in the endoplasmic reticulum membrane. The catalysed reaction is an N-acylsphinganine + 2 Fe(II)-[cytochrome b5] + O2 + 2 H(+) = an N-acylsphing-4-enine + 2 Fe(III)-[cytochrome b5] + 2 H2O. It carries out the reaction all-trans-retinol = 11-cis-retinol. The enzyme catalyses all-trans-retinol = 9-cis-retinol. It catalyses the reaction all-trans-retinol = 13-cis-retinol. The catalysed reaction is 11-cis-retinol = 13-cis-retinol. It carries out the reaction 11-cis-retinol = 9-cis-retinol. Its function is as follows. Has sphingolipid-delta-4-desaturase activity. Converts D-erythro-sphinganine to D-erythro-sphingosine (E-sphing-4-enine). Catalyzes the equilibrium isomerization of retinols. This chain is Sphingolipid delta(4)-desaturase DES1 (DEGS1), found in Gallus gallus (Chicken).